Consider the following 543-residue polypeptide: T-complex protein 1 subunit gamma (543 aa).

It belongs to the TCP-1 chaperonin family.

Its subcellular location is the cytoplasm. In terms of biological role, molecular chaperone; assists the folding of proteins upon ATP hydrolysis. Known to play a role, in vitro, in the folding of actin and tubulin. Plays a role in microtubule polymerization. This Caenorhabditis elegans protein is T-complex protein 1 subunit gamma.